A 492-amino-acid chain; its full sequence is Regulatory protein ViaA (492 aa).

The protein belongs to the ViaA family. As to quaternary structure, homodimer. Interacts with RavA.

It is found in the cytoplasm. Component of the RavA-ViaA chaperone complex, which may act on the membrane to optimize the function of some of the respiratory chains. ViaA stimulates the ATPase activity of RavA. The polypeptide is Regulatory protein ViaA (Pectobacterium atrosepticum (strain SCRI 1043 / ATCC BAA-672) (Erwinia carotovora subsp. atroseptica)).